A 367-amino-acid polypeptide reads, in one-letter code: Phosphoribosylaminoimidazole-succinocarboxamide synthase (367 aa).

It belongs to the SAICAR synthetase family.

The enzyme catalyses 5-amino-1-(5-phospho-D-ribosyl)imidazole-4-carboxylate + L-aspartate + ATP = (2S)-2-[5-amino-1-(5-phospho-beta-D-ribosyl)imidazole-4-carboxamido]succinate + ADP + phosphate + 2 H(+). The protein operates within purine metabolism; IMP biosynthesis via de novo pathway; 5-amino-1-(5-phospho-D-ribosyl)imidazole-4-carboxamide from 5-amino-1-(5-phospho-D-ribosyl)imidazole-4-carboxylate: step 1/2. The sequence is that of Phosphoribosylaminoimidazole-succinocarboxamide synthase from Shewanella baltica (strain OS155 / ATCC BAA-1091).